The chain runs to 331 residues: MGHCFSLPSSQSEIHEDNEHGDGNVVCYGEEFGLDQDLPVHRLGSVCSIQGTKVLNQDHAVLYQGYGTRDTELCGVFDGHGKNGHMVSKMVRNRLPSVLLALKEELNQESNVCEEEASKWEKACFTAFRLIDRELNLQVFNCSFSGSTGVVAITQGDDLVIANLGDSRAVLGTMTEDGEIKAVQLTSDLTPDVPSEAERIRMCKGRVFAMKTEPSSQRVWLPNQNIPGLAMSRAFGDFRLKDHGVIAVPEISQHRITSKDQFLVLATDGVWDMLSNDEVVSLIWSSGKKQASAAKMVAEAAEAAWKKRLKYTKVDDITVICLFLQNKEQPS.

One can recognise a PPM-type phosphatase domain in the interval 43-324 (LGSVCSIQGT…DDITVICLFL (282 aa)). 4 residues coordinate Mn(2+): Asp78, Gly79, Asp268, and Asp315.

It belongs to the PP2C family. Mg(2+) serves as cofactor. Requires Mn(2+) as cofactor.

The catalysed reaction is O-phospho-L-seryl-[protein] + H2O = L-seryl-[protein] + phosphate. It carries out the reaction O-phospho-L-threonyl-[protein] + H2O = L-threonyl-[protein] + phosphate. The protein is Probable protein phosphatase 2C 72 of Arabidopsis thaliana (Mouse-ear cress).